The following is a 510-amino-acid chain: NAD(P)H-quinone oxidoreductase subunit 2 A, chloroplastic (510 aa).

13 consecutive transmembrane segments (helical) span residues 24-44 (LLLF…GLIL), 57-77 (IPWL…ALLF), 99-119 (IFQF…VEYI), 124-144 (MAIT…MFLC), 149-169 (LITI…LSGY), 183-203 (YLLM…WLYG), 227-247 (PGIS…LSPA), 295-315 (WHLL…LIAI), 323-343 (MLAY…IVGD), 354-374 (YMLF…LFGL), 395-415 (ALSL…AGFF), 418-438 (LYLF…IGLL), and 484-504 (MIVC…IIAI).

The protein belongs to the complex I subunit 2 family. In terms of assembly, NDH is composed of at least 16 different subunits, 5 of which are encoded in the nucleus.

Its subcellular location is the plastid. The protein localises to the chloroplast thylakoid membrane. It catalyses the reaction a plastoquinone + NADH + (n+1) H(+)(in) = a plastoquinol + NAD(+) + n H(+)(out). It carries out the reaction a plastoquinone + NADPH + (n+1) H(+)(in) = a plastoquinol + NADP(+) + n H(+)(out). In terms of biological role, NDH shuttles electrons from NAD(P)H:plastoquinone, via FMN and iron-sulfur (Fe-S) centers, to quinones in the photosynthetic chain and possibly in a chloroplast respiratory chain. The immediate electron acceptor for the enzyme in this species is believed to be plastoquinone. Couples the redox reaction to proton translocation, and thus conserves the redox energy in a proton gradient. The chain is NAD(P)H-quinone oxidoreductase subunit 2 A, chloroplastic from Panax ginseng (Korean ginseng).